Here is a 256-residue protein sequence, read N- to C-terminus: 1-(5-phosphoribosyl)-5-[(5-phosphoribosylamino)methylideneamino] imidazole-4-carboxamide isomerase (256 aa).

The active-site Proton acceptor is the Asp-8. The active-site Proton donor is Asp-130.

Belongs to the HisA/HisF family.

It is found in the cytoplasm. It catalyses the reaction 1-(5-phospho-beta-D-ribosyl)-5-[(5-phospho-beta-D-ribosylamino)methylideneamino]imidazole-4-carboxamide = 5-[(5-phospho-1-deoxy-D-ribulos-1-ylimino)methylamino]-1-(5-phospho-beta-D-ribosyl)imidazole-4-carboxamide. The protein operates within amino-acid biosynthesis; L-histidine biosynthesis; L-histidine from 5-phospho-alpha-D-ribose 1-diphosphate: step 4/9. This is 1-(5-phosphoribosyl)-5-[(5-phosphoribosylamino)methylideneamino] imidazole-4-carboxamide isomerase from Chlorobium luteolum (strain DSM 273 / BCRC 81028 / 2530) (Pelodictyon luteolum).